Consider the following 92-residue polypeptide: Regakine-1 (92 aa).

An N-terminal signal peptide occupies residues 1–21 (MRVSLAALAFLLTLAVLHSEA). Disulfide bonds link Cys-32–Cys-56 and Cys-33–Cys-72.

This sequence belongs to the intercrine beta (chemokine CC) family. In terms of tissue distribution, plasma serum.

It is found in the secreted. Chemotactic activity for neutrophils and lymphocytes. Binds to heparin. This chain is Regakine-1, found in Bos taurus (Bovine).